A 253-amino-acid polypeptide reads, in one-letter code: Imidazole glycerol phosphate synthase subunit HisF (253 aa).

Catalysis depends on residues Asp-11 and Asp-130.

It belongs to the HisA/HisF family. Heterodimer of HisH and HisF.

It is found in the cytoplasm. It catalyses the reaction 5-[(5-phospho-1-deoxy-D-ribulos-1-ylimino)methylamino]-1-(5-phospho-beta-D-ribosyl)imidazole-4-carboxamide + L-glutamine = D-erythro-1-(imidazol-4-yl)glycerol 3-phosphate + 5-amino-1-(5-phospho-beta-D-ribosyl)imidazole-4-carboxamide + L-glutamate + H(+). It functions in the pathway amino-acid biosynthesis; L-histidine biosynthesis; L-histidine from 5-phospho-alpha-D-ribose 1-diphosphate: step 5/9. In terms of biological role, IGPS catalyzes the conversion of PRFAR and glutamine to IGP, AICAR and glutamate. The HisF subunit catalyzes the cyclization activity that produces IGP and AICAR from PRFAR using the ammonia provided by the HisH subunit. This is Imidazole glycerol phosphate synthase subunit HisF from Thermoanaerobacter sp. (strain X514).